We begin with the raw amino-acid sequence, 427 residues long: Peptidase B (427 aa).

Residues Lys-195 and Asp-200 each contribute to the Mn(2+) site. Lys-207 is a catalytic residue. Asp-218, Asp-277, and Glu-279 together coordinate Mn(2+). Arg-281 is a catalytic residue.

The protein belongs to the peptidase M17 family. In terms of assembly, homohexamer. Mn(2+) is required as a cofactor.

It is found in the cytoplasm. The enzyme catalyses Release of an N-terminal amino acid, Xaa, from a peptide or arylamide. Xaa is preferably Glu or Asp but may be other amino acids, including Leu, Met, His, Cys and Gln.. Probably plays an important role in intracellular peptide degradation. This Shigella flexneri serotype 5b (strain 8401) protein is Peptidase B.